We begin with the raw amino-acid sequence, 590 residues long: Glutamine--fructose-6-phosphate aminotransferase [isomerizing] (590 aa).

The active-site Nucleophile; for GATase activity is Cys-2. Residues 2–219 (CGIVACILKD…DGEMVILDGD (218 aa)) enclose the Glutamine amidotransferase type-2 domain. 2 SIS domains span residues 277–415 (VVEE…PELM) and 438–580 (LAAT…PDKP). The active-site For Fru-6P isomerization activity is Lys-585.

In terms of assembly, homodimer.

Its subcellular location is the cytoplasm. The catalysed reaction is D-fructose 6-phosphate + L-glutamine = D-glucosamine 6-phosphate + L-glutamate. Functionally, catalyzes the first step in hexosamine metabolism, converting fructose-6P into glucosamine-6P using glutamine as a nitrogen source. The protein is Glutamine--fructose-6-phosphate aminotransferase [isomerizing] of Methanothermobacter thermautotrophicus (strain ATCC 29096 / DSM 1053 / JCM 10044 / NBRC 100330 / Delta H) (Methanobacterium thermoautotrophicum).